The chain runs to 2555 residues: MTAITHGSPVGGNDSQGQVLDGQSQHLFQQNQTSSPDSSNENSVATPPPEEQGQGDAPPQHEDEEPAFPHTELANLDDMINRPRWVVPVLPKGELEVLLEAAIDLSVKGLDVKSEACQRFFRDGLTISFTKILMDEAVSGWKFEIHRCIINNTHRLVELCVAKLSQDWFPLLELLAMALNPHCKFHIYNGTRPCELISSNAQLPEDELFARSSDPRSPKGWLVDLINKFGTLNGFQILHDRFFNGSALNIQIIAALIKPFGQCYEFLSQHTLKKYFIPVIEIVPHLLENLTDEELKKEAKNEAKNDALSMIIKSLKNLASRISGQDETIKNLEIFRLKMILRLLQISSFNGKMNALNEINKVISSVSYYTHRHSNPEEEEWLTAERMAEWIQQNNILSIVLQDSLHQPQYVEKLEKILRFVIKEKALTLQDLDNIWAAQAGKHEAIVKNVHDLLAKLAWDFSPGQLDHLFDCFKASWTNASKKQREKLLELIRRLAEDDKDGVMAHKVLNLLWNLAQSDDVPVDIMDLALSAHIKILDYSCSQDRDAQKIQWIDHFIEELRTNDKWVIPALKQIREICSLFGEASQNLSQTQRSPHIFYRHDLINQLQQNHALVTLVAENLATYMNSIRLYAGDHEDYDPQTVRLGSRYSHVQEVQERLNFLRFLLKDGQLWLCAPQAKQIWKCLAENAVYLCDREACFKWYSKLMGDEPDLDPDINKDFFESNVLQLDPSLLTENGMKCFERFFKAVNCRERKLIAKRRSYMMDDLELIGLDYLWRVVIQSSDEIANRAIDLLKEIYTNLGPRLKANQVVIHEDFIQSCFDRLKASYDTLCVFDGDKNSINCARQEAIRMVRVLTVIKEYINECDSDYHKERMILPMSRAFRGKHLSLIVRFPNQGRQVDELDIWSHTNDTIGSVRRCIVNRIKANVAHKKIELFVGGELIDSEDDRKLIGQLNLKDKSLITAKLTQINFNMPSSPDSSSDSSTASPGNHRNHYNDGPNLEVESCLPGVIMSVHPRYISFLWQVADLGSNLNMPPLRDGARVLMKLMPPDRTAVEKLRAVCLDHAKLGEGKLSPPLDSLFFGPSASQVLYLTEVVYALLMPAGVPLTDGSSDFQVHFLKSGGLPLVLSMLIRNNFLPNTDMETRRGAYLNALKIAKLLLTAIGYGHVRAVAEACQPVVDGTDPITQINQVTHDQAVVLQSALQSIPNPSSECVLRNESILLAQEISNEASRYMPDICVIRAIQKIIWASACGALGLVFSPNEEITKIYQMTTNGSNKLEVEDEQVCCEALEVMTLCFALLPTALDALSKEKAWQTFIIDLLLHCPSKTVRQLAQEQFFLMCTRCCMGHRPLLFFITLLFTILGSTAREKGKYSGDYFTLLRHLLNYAYNGNINIPNAEVLLVSEIDWLKRIRDNVKNTGETGVEEPILEGHLGVTKELLAFQTSEKKYHFGCEKGGANLIKELIDDFIFPASKVYLQYLRSGELPAEQAIPVCSSPVTINAGFELLVALAIGCVRNLKQIVDCLTEMYYMGTAITTCEALTEWEYLPPVGPRPPKGFVGLKNAGATCYMNSVIQQLYMIPSIRNSILAIEGTGSDLHDDMFGDEKQDSESNVDPRDDVFGYPHQFEDKPALSKTEDRKEYNIGVLRHLQVIFGHLAASQLQYYVPRGFWKQFRLWGEPVNLREQHDALEFFNSLVDSLDEALKALGHPAILSKVLGGSFADQKICQGCPHRYECEESFTTLNVDIRNHQNLLDSLEQYIKGDLLEGANAYHCEKCDKKVDTVKRLLIKKLPRVLAIQLKRFDYDWERECAIKFNDYFEFPRELDMGPYTVAGVANLERDNVNSENELIEQKEQSDNETAGGTKYRLVGVLVHSGQASGGHYYSYIIQRNGKDDQTDHWYKFDDGDVTECKMDDDEEMKNQCFGGEYMGEVFDHMMKRMSYRRQKRWWNAYILFYEQMDMIDEDDEMIRYISELTIARPHQIIMSPAIERSVRKQNVKFMHNRLQYSLEYFQFVKKLLTCNGVYLNPAPGQDYLLPEAEEITMISIQLAARFLFTTGFHTKKIVRGPASDWYDALCVLLRHSKNVRFWFTHNVLFNVSNRFSEYLLECPSAEVRGAFAKLIVFIAHFSLQDGSCPSPFASPGPSSQACDNLSLSDHLLRATLNLLRREVSEHGHHLQQYFNLFVMYANLGVAEKTQLLKLNVPATFMLVSLDEGPGPPIKYQYAELGKLYSVVSQLIRCCNVSSTMQSSINGNPPLPNPFGDLNLSQPIMPIQQNVLDILFVRTSYVKKIIEDCSNSEDTIKLLRFCSWENPQFSSTVLSELLWQVAYSYTYELRPYLDLLFQILLIEDSWQTHRIHNALKGIPDDRDGLFDTIQRSKNHYQKRAYQCIKCMVALFSSCPVAYQILQGNGDLKRKWTWAVEWLGDELERRPYTGNPQYSYNNWSPPVQSNETANGYFLERSHSARMTLAKACELCPEEEPDDQDAPDEHEPSPSEDAPLYPHSPASQYQQNNHVHGQPYTGPAAHHLNNPQKTGQRTQENYEGNEEVSSPQMKDQ.

The disordered stretch occupies residues 1 to 66 (MTAITHGSPV…APPQHEDEEP (66 aa)). Residues 13-45 (NDSQGQVLDGQSQHLFQQNQTSSPDSSNENSVA) show a composition bias toward polar residues. Ser-589 is modified (phosphoserine). Thr-591 is modified (phosphothreonine). Residues 972 to 997 (NMPSSPDSSSDSSTASPGNHRNHYND) are disordered. Residues 974 to 984 (PSSPDSSSDSS) are compositionally biased toward low complexity. Residues 1559 to 1958 (VGLKNAGATC…NAYILFYEQM (400 aa)) form the USP domain. Catalysis depends on Cys-1568, which acts as the Nucleophile. The Zn(2+) site is built by Cys-1729, His-1731, Cys-1773, and Cys-1776. His-1881 functions as the Proton acceptor in the catalytic mechanism. A Phosphoserine modification is found at Ser-2444. Residues 2476–2485 (PEEEPDDQDA) show a composition bias toward acidic residues. Positions 2476 to 2555 (PEEEPDDQDA…EVSSPQMKDQ (80 aa)) are disordered. 2 stretches are compositionally biased toward polar residues: residues 2504–2514 (PASQYQQNNHV) and 2528–2555 (NNPQ…MKDQ). The residue at position 2541 (Tyr-2541) is a Phosphotyrosine. Ser-2548 carries the phosphoserine modification.

Belongs to the peptidase C19 family. As to expression, widely expressed in embryonic and adult tissues.

It carries out the reaction Thiol-dependent hydrolysis of ester, thioester, amide, peptide and isopeptide bonds formed by the C-terminal Gly of ubiquitin (a 76-residue protein attached to proteins as an intracellular targeting signal).. It functions in the pathway protein modification; protein ubiquitination. In terms of biological role, deubiquitinase that mediates deubiquitination of target proteins. May stabilize target proteins that are important for male germ cell development. The protein is Ubiquitin carboxyl-terminal hydrolase 9Y of Homo sapiens (Human).